The following is a 397-amino-acid chain: Histidinol-phosphate aminotransferase (397 aa).

N6-(pyridoxal phosphate)lysine is present on K247.

The protein belongs to the class-II pyridoxal-phosphate-dependent aminotransferase family. Histidinol-phosphate aminotransferase subfamily. In terms of assembly, homodimer. Pyridoxal 5'-phosphate is required as a cofactor.

The enzyme catalyses L-histidinol phosphate + 2-oxoglutarate = 3-(imidazol-4-yl)-2-oxopropyl phosphate + L-glutamate. It participates in amino-acid biosynthesis; L-histidine biosynthesis; L-histidine from 5-phospho-alpha-D-ribose 1-diphosphate: step 7/9. This Frankia casuarinae (strain DSM 45818 / CECT 9043 / HFP020203 / CcI3) protein is Histidinol-phosphate aminotransferase.